We begin with the raw amino-acid sequence, 1058 residues long: Carbamoyl phosphate synthase large chain (1058 aa).

A carboxyphosphate synthetic domain region spans residues 1-401; sequence MPKRTDIQKI…SLLKACRSLE (401 aa). ATP-binding residues include Arg-129, Arg-169, Gly-175, Gly-176, Arg-208, Ile-210, Glu-215, Gly-241, Ile-242, His-243, Gln-284, and Glu-298. Positions 133–327 constitute an ATP-grasp 1 domain; it reads KQLMEELEQP…IAKLAAKIAV (195 aa). Mg(2+) is bound by residues Gln-284, Glu-298, and Asn-300. Mn(2+)-binding residues include Gln-284, Glu-298, and Asn-300. The segment at 402-546 is oligomerization domain; that stretch reads IGVHHNEIPE…YSTYGWENES (145 aa). Positions 547 to 929 are carbamoyl phosphate synthetic domain; that stretch reads IRSDKESVLV…ALYKAFEASY (383 aa). The ATP-grasp 2 domain maps to 671–861; it reads EQALKELDIP…MAQVATKLIL (191 aa). ATP contacts are provided by Arg-707, Ser-746, Ile-748, Glu-752, Gly-777, Val-778, His-779, Ser-780, Gln-820, and Glu-832. Mg(2+) contacts are provided by Gln-820, Glu-832, and Asn-834. Mn(2+)-binding residues include Gln-820, Glu-832, and Asn-834. The region spanning 930-1058 is the MGS-like domain; sequence LHLPTFGNVV…ESRSFVTEAI (129 aa). The tract at residues 930 to 1058 is allosteric domain; it reads LHLPTFGNVV…ESRSFVTEAI (129 aa).

It belongs to the CarB family. As to quaternary structure, composed of two chains; the small (or glutamine) chain promotes the hydrolysis of glutamine to ammonia, which is used by the large (or ammonia) chain to synthesize carbamoyl phosphate. Tetramer of heterodimers (alpha,beta)4. Mg(2+) serves as cofactor. It depends on Mn(2+) as a cofactor.

The catalysed reaction is hydrogencarbonate + L-glutamine + 2 ATP + H2O = carbamoyl phosphate + L-glutamate + 2 ADP + phosphate + 2 H(+). It carries out the reaction hydrogencarbonate + NH4(+) + 2 ATP = carbamoyl phosphate + 2 ADP + phosphate + 2 H(+). It participates in amino-acid biosynthesis; L-arginine biosynthesis; carbamoyl phosphate from bicarbonate: step 1/1. It functions in the pathway pyrimidine metabolism; UMP biosynthesis via de novo pathway; (S)-dihydroorotate from bicarbonate: step 1/3. Its function is as follows. Large subunit of the glutamine-dependent carbamoyl phosphate synthetase (CPSase). CPSase catalyzes the formation of carbamoyl phosphate from the ammonia moiety of glutamine, carbonate, and phosphate donated by ATP, constituting the first step of 2 biosynthetic pathways, one leading to arginine and/or urea and the other to pyrimidine nucleotides. The large subunit (synthetase) binds the substrates ammonia (free or transferred from glutamine from the small subunit), hydrogencarbonate and ATP and carries out an ATP-coupled ligase reaction, activating hydrogencarbonate by forming carboxy phosphate which reacts with ammonia to form carbamoyl phosphate. This Streptococcus pneumoniae serotype 2 (strain D39 / NCTC 7466) protein is Carbamoyl phosphate synthase large chain.